We begin with the raw amino-acid sequence, 100 residues long: Large ribosomal subunit protein uL23 (100 aa).

This sequence belongs to the universal ribosomal protein uL23 family. As to quaternary structure, part of the 50S ribosomal subunit. Contacts protein L29, and trigger factor when it is bound to the ribosome.

Functionally, one of the early assembly proteins it binds 23S rRNA. One of the proteins that surrounds the polypeptide exit tunnel on the outside of the ribosome. Forms the main docking site for trigger factor binding to the ribosome. This is Large ribosomal subunit protein uL23 from Pseudoalteromonas translucida (strain TAC 125).